The following is a 270-amino-acid chain: SAMP-activating enzyme E1 (270 aa).

Residues Gly42, Asp63, 70 to 74, and Lys87 each bind ATP; that span reads SNLQR. Lys113 participates in a covalent cross-link: Glycyl lysine isopeptide (Lys-Gly) (interchain with G-Cter in SAMP2). Residue 131–132 participates in ATP binding; it reads DN. Cys171 and Cys174 together coordinate Zn(2+). Catalysis depends on Cys188, which acts as the Glycyl thioester intermediate. Positions 245 and 248 each coordinate Zn(2+).

This sequence belongs to the HesA/MoeB/ThiF family. Interacts with NcsA. The cofactor is Zn(2+). Sampylated at Lys-113 with the archaeal ubiquitin-like protein SAMP2. Also sampylated with SAMP1.

It catalyses the reaction [small archaeal modifier protein]-C-terminal Gly-Gly + ATP + H(+) = [small archaeal modifier protein]-C-terminal Gly-Gly-AMP + diphosphate. In terms of biological role, likely activates multiple ubiquitin-like SAMPs for protein conjugation as well as for sulfur transfer, via ATP-dependent adenylation at their C-terminus. In fact, it is required for the formation of all three SAMP1-, SAMP2- and SAMP3-protein conjugates, and for molybdenum cofactor (MoCo) biosynthesis and thiolation of tRNAs. The polypeptide is SAMP-activating enzyme E1 (ubaA) (Haloferax volcanii (strain ATCC 29605 / DSM 3757 / JCM 8879 / NBRC 14742 / NCIMB 2012 / VKM B-1768 / DS2) (Halobacterium volcanii)).